We begin with the raw amino-acid sequence, 207 residues long: Urease accessory protein UreE (207 aa).

The tract at residues 171 to 207 is disordered; the sequence is HHGHAHSHSHSHDHDHDHDHDHQHGPGCAHGHGHDHH. Residues 180–194 are compositionally biased toward basic and acidic residues; it reads HSHDHDHDHDHDHQH.

It belongs to the UreE family.

Its subcellular location is the cytoplasm. In terms of biological role, involved in urease metallocenter assembly. Binds nickel. Probably functions as a nickel donor during metallocenter assembly. The sequence is that of Urease accessory protein UreE from Burkholderia lata (strain ATCC 17760 / DSM 23089 / LMG 22485 / NCIMB 9086 / R18194 / 383).